Here is a 260-residue protein sequence, read N- to C-terminus: tRNA pseudouridine synthase A (260 aa).

Aspartate 51 acts as the Nucleophile in catalysis. Tyrosine 109 is a binding site for substrate.

This sequence belongs to the tRNA pseudouridine synthase TruA family. As to quaternary structure, homodimer.

It catalyses the reaction uridine(38/39/40) in tRNA = pseudouridine(38/39/40) in tRNA. Its function is as follows. Formation of pseudouridine at positions 38, 39 and 40 in the anticodon stem and loop of transfer RNAs. The protein is tRNA pseudouridine synthase A of Methylibium petroleiphilum (strain ATCC BAA-1232 / LMG 22953 / PM1).